Here is a 161-residue protein sequence, read N- to C-terminus: Allophycocyanin beta chain (161 aa).

N71 is modified (N4-methylasparagine). C81 contributes to the (2R,3E)-phycocyanobilin binding site.

Belongs to the phycobiliprotein family. As to quaternary structure, heterodimer of an alpha and a beta chain. Contains one covalently linked phycocyanobilin chromophore.

The protein localises to the cellular thylakoid membrane. In terms of biological role, light-harvesting photosynthetic bile pigment-protein from the phycobiliprotein complex. Allophycocyanin has a maximum absorption at approximately 650 nanometers. This Anabaena cylindrica protein is Allophycocyanin beta chain (apcB).